A 302-amino-acid chain; its full sequence is tRNA dimethylallyltransferase (302 aa).

ATP is bound at residue 9-16 (GPTAAGKS). Position 11–16 (11–16 (TAAGKS)) interacts with substrate. Residues 34–37 (DSRQ) form an interaction with substrate tRNA region.

It belongs to the IPP transferase family. As to quaternary structure, monomer. Mg(2+) is required as a cofactor.

The enzyme catalyses adenosine(37) in tRNA + dimethylallyl diphosphate = N(6)-dimethylallyladenosine(37) in tRNA + diphosphate. In terms of biological role, catalyzes the transfer of a dimethylallyl group onto the adenine at position 37 in tRNAs that read codons beginning with uridine, leading to the formation of N6-(dimethylallyl)adenosine (i(6)A). In Gloeobacter violaceus (strain ATCC 29082 / PCC 7421), this protein is tRNA dimethylallyltransferase.